Consider the following 228-residue polypeptide: Cytochrome c oxidase subunit 2 (228 aa).

Over 1–14 (MAYPLQLGLQDASS) the chain is Mitochondrial intermembrane. A helical membrane pass occupies residues 15–45 (PIMEELTNFHDHTLMIVFLISSLVLYLISLM). Over 46-59 (LTTKLIHTSTMDAQ) the chain is Mitochondrial matrix. A helical transmembrane segment spans residues 60–87 (EVETIWTILPAIILILIALPSLRILYMM). Topologically, residues 88–228 (DEINNPVLTV…FENWSVSMTQ (141 aa)) are mitochondrial intermembrane. Cu cation is bound by residues His-161, Cys-196, Glu-198, Cys-200, His-204, and Met-207. A Mg(2+)-binding site is contributed by Glu-198.

Belongs to the cytochrome c oxidase subunit 2 family. Component of the cytochrome c oxidase (complex IV, CIV), a multisubunit enzyme composed of 14 subunits. The complex is composed of a catalytic core of 3 subunits MT-CO1, MT-CO2 and MT-CO3, encoded in the mitochondrial DNA, and 11 supernumerary subunits COX4I, COX5A, COX5B, COX6A, COX6B, COX6C, COX7A, COX7B, COX7C, COX8 and NDUFA4, which are encoded in the nuclear genome. The complex exists as a monomer or a dimer and forms supercomplexes (SCs) in the inner mitochondrial membrane with NADH-ubiquinone oxidoreductase (complex I, CI) and ubiquinol-cytochrome c oxidoreductase (cytochrome b-c1 complex, complex III, CIII), resulting in different assemblies (supercomplex SCI(1)III(2)IV(1) and megacomplex MCI(2)III(2)IV(2)). Found in a complex with TMEM177, COA6, COX18, COX20, SCO1 and SCO2. Interacts with TMEM177 in a COX20-dependent manner. Interacts with COX20. Interacts with COX16. The cofactor is Cu cation.

It is found in the mitochondrion inner membrane. It catalyses the reaction 4 Fe(II)-[cytochrome c] + O2 + 8 H(+)(in) = 4 Fe(III)-[cytochrome c] + 2 H2O + 4 H(+)(out). Its function is as follows. Component of the cytochrome c oxidase, the last enzyme in the mitochondrial electron transport chain which drives oxidative phosphorylation. The respiratory chain contains 3 multisubunit complexes succinate dehydrogenase (complex II, CII), ubiquinol-cytochrome c oxidoreductase (cytochrome b-c1 complex, complex III, CIII) and cytochrome c oxidase (complex IV, CIV), that cooperate to transfer electrons derived from NADH and succinate to molecular oxygen, creating an electrochemical gradient over the inner membrane that drives transmembrane transport and the ATP synthase. Cytochrome c oxidase is the component of the respiratory chain that catalyzes the reduction of oxygen to water. Electrons originating from reduced cytochrome c in the intermembrane space (IMS) are transferred via the dinuclear copper A center (CU(A)) of subunit 2 and heme A of subunit 1 to the active site in subunit 1, a binuclear center (BNC) formed by heme A3 and copper B (CU(B)). The BNC reduces molecular oxygen to 2 water molecules using 4 electrons from cytochrome c in the IMS and 4 protons from the mitochondrial matrix. The protein is Cytochrome c oxidase subunit 2 (MT-CO2) of Meriones shawi (Shaw's jird).